A 334-amino-acid polypeptide reads, in one-letter code: HTH-type transcriptional repressor PurR (334 aa).

Residues 2–56 (ATIKDVAKMAGVSTTTVSHVINKTRFVAAETEKLVLQAIQELNYSPSAVARSLKV) form the HTH lacI-type domain. Residues 4–23 (IKDVAKMAGVSTTTVSHVIN) constitute a DNA-binding region (H-T-H motif). The DNA-binding element occupies 48-56 (SAVARSLKV). Hypoxanthine contacts are provided by Y73, K189, T191, F220, and D274.

In terms of assembly, homodimer.

The protein operates within purine metabolism; purine nucleotide biosynthesis [regulation]. Its function is as follows. Is the main repressor of the genes involved in the de novo synthesis of purine nucleotides, regulating purB, purC, purEK, purF, purHD, purL, purMN and guaBA expression. PurR is allosterically activated to bind its cognate DNA by binding the purine corepressors, hypoxanthine or guanine, thereby effecting transcription repression. This Pasteurella multocida (strain Pm70) protein is HTH-type transcriptional repressor PurR.